A 359-amino-acid chain; its full sequence is Peptide chain release factor 1 (359 aa).

N5-methylglutamine is present on Gln236. The tract at residues 288–307 (QDEQDAERKSTIGTGDRSER) is disordered. The span at 293-307 (AERKSTIGTGDRSER) shows a compositional bias: basic and acidic residues.

Belongs to the prokaryotic/mitochondrial release factor family. In terms of processing, methylated by PrmC. Methylation increases the termination efficiency of RF1.

It is found in the cytoplasm. Its function is as follows. Peptide chain release factor 1 directs the termination of translation in response to the peptide chain termination codons UAG and UAA. This Streptococcus sanguinis (strain SK36) protein is Peptide chain release factor 1.